A 51-amino-acid polypeptide reads, in one-letter code: Large ribosomal subunit protein bL33 (51 aa).

This sequence belongs to the bacterial ribosomal protein bL33 family.

This chain is Large ribosomal subunit protein bL33, found in Marinobacter nauticus (strain ATCC 700491 / DSM 11845 / VT8) (Marinobacter aquaeolei).